The sequence spans 223 residues: MDKMLFWVSVFTIFLDVFAQTDLDKKVFVFPRESSSDHVNLITKLETPLQEFTVCLRAYSDLSRHYSLFSYNTPGKDNELLIYKEKLGEYSLYIGGTKVTARVPEEILAPVHICTSWESSSGIAEFWINGKPLVKKGLKRGYSVAAHPKIILGQEQDSYGGKFDRGQSFLGEIGDVYMWDSVLSPDDVQAVYYGSYVNGSILNWQALNYELNDYVIIKPRVWD.

The signal sequence occupies residues 1–19; that stretch reads MDKMLFWVSVFTIFLDVFA. The Pentraxin (PTX) domain maps to 24 to 223; it reads DKKVFVFPRE…YVIIKPRVWD (200 aa). An intrachain disulfide couples C55 to C114. Residues D77, N78, E155, Q156, D157, and Q167 each coordinate Ca(2+). An N-linked (GlcNAc...) asparagine glycan is attached at N198.

Belongs to the pentraxin family. As to quaternary structure, homopentamer. Pentraxin (or pentaxin) have a discoid arrangement of 5 non-covalently bound subunits. Ca(2+) serves as cofactor.

It localises to the secreted. The protein is Serum amyloid P-component (PTX2) of Cavia porcellus (Guinea pig).